Reading from the N-terminus, the 807-residue chain is MSKPDSIFLRALRWIQKWMVQTIVVPHDPFDDLNIDPTKPLVYLMKTESISDIAALSEITEGFGLPSPYEPLQLDGLTVPRVVCLEGRKPLFGKRESGDKFLNYFTSLLSLHSESPELDIQLVPVCLYWGRTPGKEEDSMKAAVFERENPTWLRKWLMILFLGRHNFVQFSNALSLRHMADEHGTDKRIAHKLTRVARVHFRRQRKVMTGPQLPNRQALFASLLKSESIKKAIEEESANKKVTVEKARETAIEYLDEIAADYSDSLVRIAERFLTWLWNKLYSGINIKGAEQVRQLHHDGHEIVYVPCHRSHMDYLLLSYILYYQGMVPPHIAAGINLNFWPAGPMFRRGGAFFIRRSFNGNKLYTAVFREYLDQLFAKGYAVEYFTEGGRSRTGRLLAPKTGMLAMTINSVLRGIERPVTLVPVYLGYDHVMEVATYHKELSGKKKKKESVWQVFGAIRKLGNFGQGYVNFGEPINLQQFLNQQAPEWRDELAKDPDQKPSWFTPSVNLLANRVMTNINGAAAASSVTLTSLVLLASEQNALERSQLERQLDLYLALLKTVPYTEYASVAEGNGKSIVDHCLSLNKFVSTKDLIGEIISVDEKIAITMSYYRNNIIHLMALPSLIASCLVHYDVCDRQRIHAIVMDFYPLLKAELFMSIDDVPKHVDCILDFMVEQGLLTGSDQFEITPRHITQVLLLAETISETLQRYAIIFNLLAIKPDLERSELERDSHLLAQRLGALHGITAPEFYDKKLYNTLSVKLKELGYLCSDEHRAEVIRIRDNANKLLSSLVRQTIVDSVEAEHGQ.

Residues 308–313 carry the HXXXXD motif motif; that stretch reads CHRSHM.

The protein belongs to the GPAT/DAPAT family.

The protein localises to the cell inner membrane. The catalysed reaction is sn-glycerol 3-phosphate + an acyl-CoA = a 1-acyl-sn-glycero-3-phosphate + CoA. It participates in phospholipid metabolism; CDP-diacylglycerol biosynthesis; CDP-diacylglycerol from sn-glycerol 3-phosphate: step 1/3. The protein is Glycerol-3-phosphate acyltransferase of Shewanella frigidimarina (strain NCIMB 400).